Reading from the N-terminus, the 277-residue chain is Large ribosomal subunit protein uL2 (277 aa).

Residues 219-277 (RPQTRGSAMNPVDHPHGGGEGKKNSGRHPVTPWGKPTKGAKTRRKKASDKLIISRRKGK) form a disordered region. The span at 231 to 241 (DHPHGGGEGKK) shows a compositional bias: basic and acidic residues. Positions 256–277 (KGAKTRRKKASDKLIISRRKGK) are enriched in basic residues.

It belongs to the universal ribosomal protein uL2 family. As to quaternary structure, part of the 50S ribosomal subunit. Forms a bridge to the 30S subunit in the 70S ribosome.

Functionally, one of the primary rRNA binding proteins. Required for association of the 30S and 50S subunits to form the 70S ribosome, for tRNA binding and peptide bond formation. It has been suggested to have peptidyltransferase activity; this is somewhat controversial. Makes several contacts with the 16S rRNA in the 70S ribosome. The protein is Large ribosomal subunit protein uL2 of Campylobacter curvus (strain 525.92).